Reading from the N-terminus, the 345-residue chain is Inositol 2-dehydrogenase (345 aa).

This sequence belongs to the Gfo/Idh/MocA family. As to quaternary structure, homotetramer.

It carries out the reaction myo-inositol + NAD(+) = scyllo-inosose + NADH + H(+). Functionally, involved in the oxidation of myo-inositol (MI) to 2-keto-myo-inositol (2KMI or 2-inosose). In Mycolicibacterium smegmatis (strain ATCC 700084 / mc(2)155) (Mycobacterium smegmatis), this protein is Inositol 2-dehydrogenase.